The chain runs to 506 residues: UDP-N-acetylglucosamine--peptide N-acetylglucosaminyltransferase GtfA subunit (506 aa).

16 to 19 (GVEY) is a UDP binding site. Position 241 (His-241) interacts with N-acetyl-D-glucosamine. 384 to 385 (HK) contributes to the UDP binding site. 404-407 (EGFG) contributes to the N-acetyl-D-glucosamine binding site.

It belongs to the glycosyltransferase group 1 family. Glycosyltransferase 4 subfamily. Interacts with stabilizing protein GtfB (Gtf2), probably as a heterotetramer with 2 subunits each of GtfA and GtfB, part of the accessory SecA2/SecY2 protein translocation apparatus.

The protein resides in the cytoplasm. It localises to the cell membrane. It catalyses the reaction L-seryl-[protein] + UDP-N-acetyl-alpha-D-glucosamine = 3-O-[N-acetyl-alpha-D-glucosaminyl]-L-seryl-[protein] + UDP + H(+). It functions in the pathway protein modification; protein glycosylation. In terms of biological role, required for polymorphic O-glycosylation of the serine-rich repeat protein Srr2. Catalyzes the first step in glycosylation by transferring N-acetylglucosamine from UDP-GlcNAc to serine residues of Srr2. Part of the accessory SecA2/SecY2 system specifically required to export serine-rich repeat proteins, probably Srr2 in this organism. The GtfA-GtfB (Gtf1-Gtf2 in this bacteria) complex adds GlcNAc from UDP-GlcNAc to Srr2 substrate. This subunit has low glycosyltransferase activity; GtfB enhances glycosyltransferase activity in vitro. Upon expression in S.parasanguis GtfA/GtfB restores expression of serine-rich repeat protein Fap1 and complements a biofilm formation defect. This chain is UDP-N-acetylglucosamine--peptide N-acetylglucosaminyltransferase GtfA subunit, found in Streptococcus agalactiae.